Here is a 397-residue protein sequence, read N- to C-terminus: uncharacterized protein (397 aa).

11 helical membrane passes run 9-29 (NAVL…GFLT), 38-58 (LLAS…GAQL), 85-105 (FLAA…VGGA), 112-132 (IFGI…ILIF), 148-168 (MGFI…PPVV), 182-202 (PIAI…FAGA), 226-246 (AILI…GVVS), 271-291 (VLFG…AAYT), 310-330 (WIIA…KPAA), 331-351 (VLVF…ALIL), and 365-385 (HPVF…ILSG).

This sequence belongs to the NRAMP family.

Its subcellular location is the cell membrane. This is an uncharacterized protein from Haemophilus influenzae (strain ATCC 51907 / DSM 11121 / KW20 / Rd).